Here is a 957-residue protein sequence, read N- to C-terminus: Glycine dehydrogenase (decarboxylating) (957 aa).

Residue Lys-708 is modified to N6-(pyridoxal phosphate)lysine.

This sequence belongs to the GcvP family. The glycine cleavage system is composed of four proteins: P, T, L and H. Pyridoxal 5'-phosphate is required as a cofactor.

It carries out the reaction N(6)-[(R)-lipoyl]-L-lysyl-[glycine-cleavage complex H protein] + glycine + H(+) = N(6)-[(R)-S(8)-aminomethyldihydrolipoyl]-L-lysyl-[glycine-cleavage complex H protein] + CO2. Its function is as follows. The glycine cleavage system catalyzes the degradation of glycine. The P protein binds the alpha-amino group of glycine through its pyridoxal phosphate cofactor; CO(2) is released and the remaining methylamine moiety is then transferred to the lipoamide cofactor of the H protein. The polypeptide is Glycine dehydrogenase (decarboxylating) (Escherichia coli O157:H7).